We begin with the raw amino-acid sequence, 215 residues long: 3-demethoxyubiquinol 3-hydroxylase (215 aa).

6 residues coordinate Fe cation: Glu64, Glu94, His97, Glu146, Glu178, and His181.

Belongs to the COQ7 family. Requires Fe cation as cofactor.

The protein resides in the cell membrane. The enzyme catalyses a 5-methoxy-2-methyl-3-(all-trans-polyprenyl)benzene-1,4-diol + AH2 + O2 = a 3-demethylubiquinol + A + H2O. Its pathway is cofactor biosynthesis; ubiquinone biosynthesis. Catalyzes the hydroxylation of 2-nonaprenyl-3-methyl-6-methoxy-1,4-benzoquinol during ubiquinone biosynthesis. The sequence is that of 3-demethoxyubiquinol 3-hydroxylase from Pseudomonas aeruginosa (strain LESB58).